The sequence spans 466 residues: Asparagine--tRNA ligase (466 aa).

Belongs to the class-II aminoacyl-tRNA synthetase family. Homodimer.

It localises to the cytoplasm. It catalyses the reaction tRNA(Asn) + L-asparagine + ATP = L-asparaginyl-tRNA(Asn) + AMP + diphosphate + H(+). This is Asparagine--tRNA ligase from Syntrophobacter fumaroxidans (strain DSM 10017 / MPOB).